Here is a 347-residue protein sequence, read N- to C-terminus: Transcription factor JunB (347 aa).

Residues Lys-4, Lys-33, and Lys-36 each participate in a glycyl lysine isopeptide (Lys-Gly) (interchain with G-Cter in SUMO2) cross-link. The tract at residues Lys-51–Gly-73 is disordered. Residues Arg-56–Tyr-68 are compositionally biased toward gly residues. Lys-81 is covalently cross-linked (Glycyl lysine isopeptide (Lys-Gly) (interchain with G-Cter in SUMO2)). Thr-102 and Thr-104 each carry phosphothreonine. Residue Ser-117 is modified to Phosphoserine. A Glycyl lysine isopeptide (Lys-Gly) (interchain with G-Cter in SUMO2) cross-link involves residue Lys-141. Residues Phe-239–Asp-253 show a composition bias toward basic and acidic residues. Residues Phe-239–Pro-260 form a disordered region. Lys-240 carries the N6-acetyllysine; alternate modification. Residue Lys-240 forms a Glycyl lysine isopeptide (Lys-Gly) (interchain with G-Cter in SUMO1); alternate linkage. Residue Lys-240 forms a Glycyl lysine isopeptide (Lys-Gly) (interchain with G-Cter in SUMO2); alternate linkage. Phosphoserine is present on Ser-251. Residue Thr-255 is modified to Phosphothreonine. Ser-259 carries the post-translational modification Phosphoserine. Residues Arg-268–Arg-295 are basic motif. One can recognise a bZIP domain in the interval Arg-268–His-331. The tract at residues Leu-296–Leu-324 is leucine-zipper. Residue Lys-343 forms a Glycyl lysine isopeptide (Lys-Gly) (interchain with G-Cter in SUMO2) linkage.

Belongs to the bZIP family. Jun subfamily. Binds DNA as a homodimer or as a heterodimer with another member of the Jun/Fos family. Component of an AP-1 transcription factor complex composed of JUN-FOS heterodimers composed of JUN-FOS heterodimers. As part of the AP-1 transcription factor complex, forms heterodimers with FOSB, thereby binding to the AP-1 consensus sequence and stimulating transcription. Interacts with ITCH (via its WW domains). Post-translationally, ubiquitinated by ITCH, leading to its degradation.

It is found in the nucleus. Transcription factor involved in regulating gene activity following the primary growth factor response. Binds to the DNA sequence 5'-TGA[GC]TCA-3'. Heterodimerizes with proteins of the FOS family to form an AP-1 transcription complex, thereby enhancing its DNA binding activity to an AP-1 consensus sequence and its transcriptional activity. The sequence is that of Transcription factor JunB (JUNB) from Homo sapiens (Human).